A 600-amino-acid chain; its full sequence is Aspartate--tRNA(Asp/Asn) ligase (600 aa).

Glu187 provides a ligand contact to L-aspartate. The segment at 211-214 is aspartate; that stretch reads QIFK. Positions 233 and 463 each coordinate L-aspartate. 233–235 lines the ATP pocket; sequence RDE. Glu497 is a binding site for ATP. Residue Arg504 participates in L-aspartate binding. 549 to 552 contributes to the ATP binding site; that stretch reads GVDR.

It belongs to the class-II aminoacyl-tRNA synthetase family. Type 1 subfamily. Homodimer.

It localises to the cytoplasm. It carries out the reaction tRNA(Asx) + L-aspartate + ATP = L-aspartyl-tRNA(Asx) + AMP + diphosphate. In terms of biological role, aspartyl-tRNA synthetase with relaxed tRNA specificity since it is able to aspartylate not only its cognate tRNA(Asp) but also tRNA(Asn). Reaction proceeds in two steps: L-aspartate is first activated by ATP to form Asp-AMP and then transferred to the acceptor end of tRNA(Asp/Asn). This Wolbachia pipientis wMel protein is Aspartate--tRNA(Asp/Asn) ligase.